We begin with the raw amino-acid sequence, 943 residues long: Receptor-like kinase TMK3 (943 aa).

A signal peptide spans 1 to 24; the sequence is MSNSHLGTLCFIISLLGLANFSLS. Topologically, residues 25 to 482 are extracellular; it reads QTGLDDSTMQ…ETSKKSSNVK (458 aa). Residue N41 is glycosylated (N-linked (GlcNAc...) asparagine). C54 and C61 are oxidised to a cystine. LRR repeat units lie at residues 64 to 88, 89 to 111, 112 to 134, 136 to 160, 162 to 183, 186 to 210, 212 to 232, 233 to 254, 255 to 279, and 281 to 301; these read SNRV…LQSL, SELV…LSGL, SRLQ…LFSG, SSLQ…VKEA, SLQN…FFGS, LPSL…FAGT, IQSL…LGNM, TSLV…DLSG, LVSL…LVSL, and SLTT…LFGK. 2 N-linked (GlcNAc...) asparagine glycosylation sites follow: N165 and N170. N-linked (GlcNAc...) asparagine glycosylation is found at N223 and N231. An N-linked (GlcNAc...) asparagine glycan is attached at N286. 2 disulfide bridges follow: C315–C323 and C353–C361. 3 LRR repeats span residues 363 to 386, 387 to 410, and 411 to 438; these read GGNI…SLAK, LTSL…ELTT, and LSKL…VTLV. A glycan (N-linked (GlcNAc...) asparagine) is linked at N365. Residues 441–476 are disordered; that stretch reads GNANMGKNGPNKTSDAPGASPGSKPSGGSDGSETSK. The N-linked (GlcNAc...) asparagine glycan is linked to N451. Positions 454-467 are enriched in low complexity; the sequence is SDAPGASPGSKPSG. The helical transmembrane segment at 483–503 threads the bilayer; that stretch reads IIVPVVGGVVGALCLVGLGVC. The Cytoplasmic segment spans residues 504 to 943; sequence LYAKKRKRPA…ADSFTSVDGR (440 aa). Residues 514-534 are disordered; the sequence is RVQSPSSNMVIHPHHSGDNDD. A Protein kinase domain is found at 585 to 866; that stretch reads FSEENILGRG…AHIVNVLSSL (282 aa). Residues 591-599 and K613 each bind ATP; that span reads LGRGGFGTV. The active-site Proton acceptor is D714. The disordered stretch occupies residues 904–943; sequence QTADDSGSSSSAYGSKDNTQTSIPTRPSGFADSFTSVDGR. Over residues 906 to 918 the composition is skewed to low complexity; sequence ADDSGSSSSAYGS. Positions 919 to 928 are enriched in polar residues; that stretch reads KDNTQTSIPT.

It belongs to the protein kinase superfamily. Ser/Thr protein kinase family. As to expression, expressed in roots, leaves, stems, siliques and flowers.

It localises to the membrane. The catalysed reaction is L-seryl-[protein] + ATP = O-phospho-L-seryl-[protein] + ADP + H(+). It carries out the reaction L-threonyl-[protein] + ATP = O-phospho-L-threonyl-[protein] + ADP + H(+). Its function is as follows. Involved in auxin signal transduction and cell expansion and proliferation regulation. This is Receptor-like kinase TMK3 from Arabidopsis thaliana (Mouse-ear cress).